The sequence spans 294 residues: Glycine--tRNA ligase alpha subunit (294 aa).

Belongs to the class-II aminoacyl-tRNA synthetase family. As to quaternary structure, tetramer of two alpha and two beta subunits.

The protein resides in the cytoplasm. The enzyme catalyses tRNA(Gly) + glycine + ATP = glycyl-tRNA(Gly) + AMP + diphosphate. The chain is Glycine--tRNA ligase alpha subunit from Trichodesmium erythraeum (strain IMS101).